The primary structure comprises 485 residues: ATP synthase subunit beta, cyanelle (485 aa).

162 to 169 lines the ATP pocket; that stretch reads GGAGVGKT.

It belongs to the ATPase alpha/beta chains family. In terms of assembly, F-type ATPases have 2 components, CF(1) - the catalytic core - and CF(0) - the membrane proton channel. CF(1) has five subunits: alpha(3), beta(3), gamma(1), delta(1), epsilon(1). CF(0) has four main subunits: a(1), b(1), b'(1) and c(9-12).

Its subcellular location is the plastid. It is found in the cyanelle thylakoid membrane. The catalysed reaction is ATP + H2O + 4 H(+)(in) = ADP + phosphate + 5 H(+)(out). Produces ATP from ADP in the presence of a proton gradient across the membrane. The catalytic sites are hosted primarily by the beta subunits. The protein is ATP synthase subunit beta, cyanelle of Cyanophora paradoxa.